Here is a 501-residue protein sequence, read N- to C-terminus: Solute carrier family 2, facilitated glucose transporter member 5 (501 aa).

Met1 carries the N-acetylmethionine modification. Over 1-18 (MEPQDPVKREGRLTPVIV) the chain is Cytoplasmic. A helical transmembrane segment spans residues 19–39 (LATLIAAFGSSFQYGYNVAAI). D-fructose is bound at residue Tyr32. At 40 to 68 (NSPSEFMKDFYNYTYYDRVGEYMNEFYLT) the chain is on the extracellular side. Residue Asn51 is glycosylated (N-linked (GlcNAc...) asparagine). Residues 69-91 (LLWSVTVSMFPFGGFLGSLMVGP) form a helical membrane-spanning segment. The Cytoplasmic segment spans residues 92 to 98 (LVNNLGR). The helical transmembrane segment at 99-119 (KGTLLFNNIFSIVPALLMGFS) threads the bilayer. The Extracellular portion of the chain corresponds to 120 to 126 (ELAKSFE). A helical membrane pass occupies residues 127 to 149 (MIIVARVLVGICAGLSSNVVPMY). Residues 150–161 (LGELAPKNWRGA) are Cytoplasmic-facing. The helical transmembrane segment at 162-182 (LGVVPQLFITIGILVAQIFGL) threads the bilayer. Gln167 serves as a coordination point for D-fructose. The Extracellular portion of the chain corresponds to 183–192 (RSLLANEEGW). Residues 193–213 (PILLGLTGIPAVLQLLFLPFF) traverse the membrane as a helical segment. Residues 214 to 277 (PESPRYLLIQ…LFKMRSLRWQ (64 aa)) lie on the Cytoplasmic side of the membrane. Residues 278 to 298 (VISIIVLMAGQQLSGVNAIYY) traverse the membrane as a helical segment. D-fructose-binding positions include Gln288 and 296–298 (IYY). Residues 299-313 (YADQIYLSAGVNEDD) are Extracellular-facing. The helical transmembrane segment at 314-334 (VQYVTAGTGAVNVLITVCAIF) threads the bilayer. Residues 335–342 (VVELMGRR) lie on the Cytoplasmic side of the membrane. The helical transmembrane segment at 343-363 (FLLLLGFSVCFTACCVLTGAL) threads the bilayer. Residues 364–371 (ALQDVISW) are Extracellular-facing. Residues 372–394 (MPYVSIACVISYVIGHALGPSPI) form a helical membrane-spanning segment. His387 provides a ligand contact to D-fructose. Over 395-412 (PALLVTEIFLQSSRPAAY) the chain is Cytoplasmic. A helical transmembrane segment spans residues 413–433 (MVAGTVHWLSNFTVGLVFPFI). 419-420 (HW) lines the D-fructose pocket. Residues 434-439 (QVGLGA) lie on the Extracellular side of the membrane. Residues 440–460 (YSFVIFAVICLLTTVYIFLII) traverse the membrane as a helical segment. Residues 461 to 501 (PETKSKTFIEINRIFIKMNKVPGVHPEKEELKEFPPSTARQ) lie on the Cytoplasmic side of the membrane.

Belongs to the major facilitator superfamily. Sugar transporter (TC 2.A.1.1) family. Glucose transporter subfamily.

The protein resides in the apical cell membrane. It is found in the cell membrane. Its subcellular location is the sarcolemma. It catalyses the reaction D-fructose(out) = D-fructose(in). Functions as a fructose transporter that has only low activity with other monosaccharides. Can mediate the uptake of deoxyglucose, but with low efficiency. Essential for fructose uptake in the small intestine. Plays a role in the regulation of salt uptake and blood pressure in response to dietary fructose. Required for the development of high blood pressure in response to high dietary fructose intake. The sequence is that of Solute carrier family 2, facilitated glucose transporter member 5 from Bos taurus (Bovine).